Here is a 1209-residue protein sequence, read N- to C-terminus: Major DNA-binding protein (1209 aa).

The tract at residues 290-312 (NAGKGSGRAQRQGDGSGSKNSAS) is disordered. Residues 503-516 (CGLCNQATRPACAH) fold into a zinc finger. A Required for filament formation motif is present at residues 849–850 (FW). The segment at 1182–1209 (QKRSLPDDILFDMGAPPEKKSGLTFDML) is required for nuclear localization.

This sequence belongs to the herpesviridae major DNA-binding protein family. Homooligomers. Forms double-helical filaments necessary for the formation of replication compartments within the host nucleus. Interacts with the origin-binding protein. Interacts with the helicase primase complex; this interaction stimulates primer synthesis activity of the helicase-primase complex. Interacts with the DNA polymerase. Interacts with the alkaline exonuclease; this interaction increases its nuclease processivity.

It is found in the host nucleus. Its function is as follows. Plays several crucial roles in viral infection. Participates in the opening of the viral DNA origin to initiate replication by interacting with the origin-binding protein. May disrupt loops, hairpins and other secondary structures present on ssDNA to reduce and eliminate pausing of viral DNA polymerase at specific sites during elongation. Promotes viral DNA recombination by performing strand-transfer, characterized by the ability to transfer a DNA strand from a linear duplex to a complementary single-stranded DNA circle. Can also catalyze the renaturation of complementary single strands. Additionally, reorganizes the host cell nucleus, leading to the formation of prereplicative sites and replication compartments. This process is driven by the protein which can form double-helical filaments in the absence of DNA. This Equine herpesvirus 1 (strain Ab4p) (EHV-1) protein is Major DNA-binding protein.